A 426-amino-acid chain; its full sequence is Dihydroorotase (426 aa).

H59 and H61 together coordinate Zn(2+). Residues 61-63 and N93 contribute to the substrate site; that span reads HLR. Zn(2+) is bound by residues D151, H178, and H232. N279 is a binding site for substrate. D306 is a Zn(2+) binding site. Residue D306 is part of the active site. Substrate is bound by residues H310 and 324–325; that span reads FG.

Belongs to the metallo-dependent hydrolases superfamily. DHOase family. Class I DHOase subfamily. Requires Zn(2+) as cofactor.

The enzyme catalyses (S)-dihydroorotate + H2O = N-carbamoyl-L-aspartate + H(+). It functions in the pathway pyrimidine metabolism; UMP biosynthesis via de novo pathway; (S)-dihydroorotate from bicarbonate: step 3/3. Functionally, catalyzes the reversible cyclization of carbamoyl aspartate to dihydroorotate. The polypeptide is Dihydroorotase (Brevibacillus brevis (strain 47 / JCM 6285 / NBRC 100599)).